A 489-amino-acid chain; its full sequence is Zinc finger protein 772 (489 aa).

One can recognise a KRAB domain in the interval 27 to 98 (VNFEDVFVYF…DWVDMTLAVA (72 aa)). C2H2-type zinc fingers lie at residues 144 to 166 (YPCG…QETH), 172 to 194 (YMCV…QKQH), 266 to 288 (YKCS…QRVH), 294 to 316 (YECG…QRIH), 322 to 344 (YECG…QRVH), 350 to 372 (YKCS…ESIH), 378 to 400 (YECS…WSVH), 406 to 428 (YECI…QRVH), 434 to 456 (YVCS…HRIH), and 462 to 484 (YKCS…WKIH).

This sequence belongs to the krueppel C2H2-type zinc-finger protein family.

It localises to the nucleus. Functionally, may be involved in transcriptional regulation. The sequence is that of Zinc finger protein 772 (ZNF772) from Homo sapiens (Human).